The primary structure comprises 906 residues: Inter-alpha-trypsin inhibitor heavy chain H1 (906 aa).

The first 22 residues, 1-22 (MGLRGLLCVCLVSLLALQAVAA), serve as a signal peptide directing secretion. The propeptide occupies 23-29 (QGSPTRN). The VIT domain maps to 32-161 (GGKKRMAVDA…KATFRLTYEE (130 aa)). An S-linked (Hex...) cysteine glycan is attached at C55. The residue at position 124 (S124) is a Phosphoserine. The VWFA domain maps to 287–470 (NVVFVIDISS…QQLQGFYEQV (184 aa)). A phosphothreonine mark is found at T397 and T402. The N-linked (GlcNAc...) asparagine glycan is linked to N583. S643 carries an O-linked (GalNAc...) serine glycan. T648 carries O-linked (GalNAc...) threonine glycosylation. D667 is modified (aspartate 1-(chondroitin 4-sulfate)-ester). Residues 668–906 (PHFLIHVPQK…HTDYIVPDIF (239 aa)) constitute a propeptide that is removed on maturation. N-linked (GlcNAc...) asparagine glycosylation is present at N745.

Belongs to the ITIH family. I-alpha-I plasma protease inhibitors are assembled from one or two heavy chains (HC) and one light chain, bikunin. Inter-alpha-inhibitor (I-alpha-I) is composed of ITIH1/HC1, ITIH2/HC2 and bikunin. Interacts with TNFAIP6 (via Link and CUB domains). Heavy chains are linked to bikunin via chondroitin 4-sulfate esterified to the alpha-carboxyl of the C-terminal aspartate after propeptide cleavage. In terms of processing, the S-linked glycan is composed of two 6-carbon sugars, possibly Glc or Gal.

The protein localises to the secreted. Its function is as follows. May act as a carrier of hyaluronan in serum or as a binding protein between hyaluronan and other matrix protein, including those on cell surfaces in tissues to regulate the localization, synthesis and degradation of hyaluronan which are essential to cells undergoing biological processes. In Bos taurus (Bovine), this protein is Inter-alpha-trypsin inhibitor heavy chain H1 (ITIH1).